A 393-amino-acid polypeptide reads, in one-letter code: Acetate kinase (393 aa).

Asparagine 8 contributes to the Mg(2+) binding site. Lysine 15 contributes to the ATP binding site. Arginine 91 is a substrate binding site. The active-site Proton donor/acceptor is aspartate 148. Residues histidine 206–glycine 210, aspartate 280–arginine 282, and glycine 325–asparagine 329 contribute to the ATP site. A Mg(2+)-binding site is contributed by glutamate 376.

The protein belongs to the acetokinase family. Homodimer. Mg(2+) serves as cofactor. Requires Mn(2+) as cofactor.

The protein localises to the cytoplasm. It catalyses the reaction acetate + ATP = acetyl phosphate + ADP. The protein operates within metabolic intermediate biosynthesis; acetyl-CoA biosynthesis; acetyl-CoA from acetate: step 1/2. In terms of biological role, catalyzes the formation of acetyl phosphate from acetate and ATP. Can also catalyze the reverse reaction. The sequence is that of Acetate kinase from Rhizobium meliloti (Ensifer meliloti).